The primary structure comprises 304 residues: Coenzyme PQQ synthesis protein B (304 aa).

It belongs to the PqqB family.

It functions in the pathway cofactor biosynthesis; pyrroloquinoline quinone biosynthesis. May be involved in the transport of PQQ or its precursor to the periplasm. In Azoarcus sp. (strain BH72), this protein is Coenzyme PQQ synthesis protein B.